A 333-amino-acid chain; its full sequence is MNIYDVSQKAGVSIATVSRVINGNPNVSEKTKQKVLDVMKEIGYTPNVFARGLGLNTMKTIGIMCSDSSDTFLANAVYHLEQNLRKNGYDSFLCCTGYELHTKQKYLKLLLSKRVDAIVMVGSSFLEANKKDNAYIMEAADEVPIMLINGYLSHPRIYCTLCDDHQAVYDAVSKLITQGRKEILYLYNSKSYSGLQKLSGYKAALAAHELPLDENLMQMCPNNLADTKNLLNSLVKQGLNYDAVVTAEDLLAIGTIKFIKDSGRQIPQDVSIIGYNNSLLTTCCDPELTSIDNHVETLCISTISTLMRVLNGNDVPNKTTISNDLIVRKTTNF.

Positions 1–55 (MNIYDVSQKAGVSIATVSRVINGNPNVSEKTKQKVLDVMKEIGYTPNVFARGLGL) constitute an HTH lacI-type domain. A DNA-binding region (H-T-H motif) is located at residues 3–22 (IYDVSQKAGVSIATVSRVIN).

The protein resides in the cytoplasm. In terms of biological role, involved in control of pectin and galacturonic acid metabolism. Probably represses a comprehensive set of pectin fermentation genes by binding a conserved palindrome at or downstream of their transcription start site to block transcription. In the presence of galacturonic acid may activate transcription of acetate synthesis and other aspects of carbon metabolism. The protein is HTH-type transcriptional regulator Cphy_2742 of Lachnoclostridium phytofermentans (strain ATCC 700394 / DSM 18823 / ISDg) (Clostridium phytofermentans).